A 155-amino-acid chain; its full sequence is Gastrin-releasing peptide (155 aa).

An N-terminal signal peptide occupies residues 1 to 31 (MEGVLLFWKYRALFFLVLCSLVLCKVHLSQA). Methionine 60 is modified (methionine amide). A propeptide spanning residues 128-155 (FSGAEDNNLKEMLDYLYQMMNMKENTSS) is cleaved from the precursor.

It belongs to the bombesin/neuromedin-B/ranatensin family. As to expression, brain and stomach. In the stomach GRP was localized, at the base of the gastric pits, to occasional cells whose distribution and appearance were consistent with that of gut neuroendocrine cells.

It localises to the secreted. It is found in the cytoplasmic vesicle. The protein resides in the secretory vesicle lumen. Functionally, stimulates the release of gastrin and other gastrointestinal hormones. This Bombina orientalis (Oriental fire-bellied toad) protein is Gastrin-releasing peptide (grp).